A 519-amino-acid chain; its full sequence is Membrane protein insertase YidC (519 aa).

6 helical membrane-spanning segments follow: residues 6 to 26 (ILFVTLSAFTVFIWYFFFAQP), 298 to 318 (VDFGFFGFLGKIAFSILVFFY), 324 to 344 (YGWAIIMLTTIIQILVLPLTL), 390 to 410 (LGGCLPMLLQLPIFWAFFTML), 434 to 454 (FMQFGSFNLNLLPLMMGIGMF), and 471 to 491 (IMYIMPVIFTFMFWSFPSGLV).

This sequence belongs to the OXA1/ALB3/YidC family. Type 1 subfamily. As to quaternary structure, interacts with the Sec translocase complex via SecD. Specifically interacts with transmembrane segments of nascent integral membrane proteins during membrane integration.

It is found in the cell inner membrane. Its function is as follows. Required for the insertion and/or proper folding and/or complex formation of integral membrane proteins into the membrane. Involved in integration of membrane proteins that insert both dependently and independently of the Sec translocase complex, as well as at least some lipoproteins. Aids folding of multispanning membrane proteins. This chain is Membrane protein insertase YidC, found in Endomicrobium trichonymphae.